We begin with the raw amino-acid sequence, 373 residues long: Glutamine synthetase (373 aa).

Ala-2 is modified (N-acetylalanine). Residues 2 to 25 (ATSASSHLNKGIKQVYMSLPQGEK) are required for glutamine-induced ubiquitination by CRL4(CRBN) and proteasomal degradation. N6-acetyllysine is present on residues Lys-11 and Lys-14. One can recognise a GS beta-grasp domain in the interval 24–106 (EKVQAMYIWI…VFCEVFKYNR (83 aa)). At Tyr-104 the chain carries Phosphotyrosine. The region spanning 113 to 373 (LRHTCKRIMD…TGDEPFQYKN (261 aa)) is the GS catalytic domain. Glu-134 lines the ATP pocket. The Mn(2+) site is built by Glu-134, Glu-136, Glu-196, and Glu-203. 203 to 208 (EFQIGP) serves as a coordination point for ATP. L-glutamate is bound at residue 246–247 (NW). Residue His-253 coordinates Mn(2+). ATP-binding positions include 255-257 (NFS), Arg-319, and Arg-324. Arg-319 is an L-glutamate binding site. 336–338 (YFE) is an ADP binding site. Glu-338 is a Mn(2+) binding site. Arg-340 lines the L-glutamate pocket. The residue at position 343 (Ser-343) is a Phosphoserine.

This sequence belongs to the glutamine synthetase family. In terms of assembly, decamer; composed of two pentamers. Interacts with PALMD. Interacts with RHOJ. Interacts with BEST2; this interaction tethers a fraction of GLUL to the membrane, causing a decrease of cytosolic glutamine synthase (GS) activity and inhibits the chloride channel activity of BEST2 by affecting the gating at the aperture in the absence of intracellular glutamate. Mg(2+) serves as cofactor. Requires Mn(2+) as cofactor. Palmitoylated; undergoes autopalmitoylation. Post-translationally, acetylated by EP300/p300; acetylation is stimulated by increased glutamine levels and promotes ubiquitin-mediated proteasomal degradation. In terms of processing, ubiquitinated by ZNRF1. Ubiquitinated by the DCX (DDB1-CUL4-X-box) E3 ubiquitin-protein ligase complex called CRL4(CRBN), leading to proteasomal degradation.

Its subcellular location is the cytoplasm. The protein localises to the cytosol. It localises to the microsome. It is found in the mitochondrion. The protein resides in the cell membrane. It carries out the reaction L-glutamate + NH4(+) + ATP = L-glutamine + ADP + phosphate + H(+). It catalyses the reaction L-cysteinyl-[protein] + hexadecanoyl-CoA = S-hexadecanoyl-L-cysteinyl-[protein] + CoA. With respect to regulation, glutamine synthetase activity is inhibited by methionine sulfoximine (MSO). Glutamine synthetase that catalyzes the ATP-dependent conversion of glutamate and ammonia to glutamine. Its role depends on tissue localization: in the brain, it regulates the levels of toxic ammonia and converts neurotoxic glutamate to harmless glutamine, whereas in the liver, it is one of the enzymes responsible for the removal of ammonia. Plays a key role in ammonium detoxification during erythropoiesis: the glutamine synthetase activity is required to remove ammonium generated by porphobilinogen deaminase (HMBS) during heme biosynthesis to prevent ammonium accumulation and oxidative stress. Essential for proliferation of fetal skin fibroblasts. Independently of its glutamine synthetase activity, required for endothelial cell migration during vascular development. Involved in angiogenesis by regulating membrane localization and activation of the GTPase RHOJ, possibly by promoting RHOJ palmitoylation. May act as a palmitoyltransferase for RHOJ: able to autopalmitoylate and then transfer the palmitoyl group to RHOJ. Plays a role in ribosomal 40S subunit biogenesis. Through the interaction with BEST2, inhibits BEST2 channel activity by affecting the gating at the aperture in the absence of intracellular L-glutamate, but sensitizes BEST2 to intracellular L-glutamate, which promotes the opening of BEST2 and thus relieves its inhibitory effect on BEST2. This chain is Glutamine synthetase, found in Canis lupus familiaris (Dog).